Consider the following 715-residue polypeptide: MSSPKRSSKPSMSLAPSGSSMPTADPKPPASLKSTKSATPNRSLVPTKPATSRNSVMSPSSSKSTKSTSTKRAPSNRPSSRSRVRSKARTPSRVSTDTRTSKASKASDVRCHQRRGTHSRGRTPGRRGSRSSKRSPSRASTPGRIRTHGARPGMASRVRTPTSQQKGSRGKSYGRPRTSNRERSDSQPRNLSKKSYRPPGGSGIGRSSELAVTPSTAKCQTPTGIPSKEKSDNPSPSSSRKVKSYGQMIIPSREKSYSPTEMSSRVKSYNQASTRSRPQSHSQSRSPRRSRSGSQKRTHSRVRSHSWKRNHSRARSRTRKGILSQMGRHSQSRSHSKGKSQNQSRTPRRGRSHNWSRNPSKERSHSHSRSSSKERDHRGSSSPRKESGRSQSGSPNKQRDHSRSRSPNKARDRSRSRSPYKARDRSRSRSPNKARDCSRSRSPYKARDRSRSRSPNKARDHSRSRSPNKARDRSRSRSPSKERDHSQLGSPSKERDHRRSRSPSKERQCRQSRSSSKERDHRRSRSPSKERQRRQSRSPNKERDRSQSRSPSEEREHRQSRSPSKERDRRRWRSPSKERERRQSRSSSEERDHSRSRSPNKQSGYSRPRASSKEKAHSRSRTPSKEGNHSQSRTSSKESDPSQSTVPRSPDWKRSPTRTSSLSQNRTPSKTSSHSPSTFPSGGQTLSQDDSQADATTSKATLPGERSSSSSSKLA.

The span at 1 to 13 shows a compositional bias: low complexity; that stretch reads MSSPKRSSKPSMS. The segment at 1–715 is disordered; that stretch reads MSSPKRSSKP…RSSSSSSKLA (715 aa). Polar residues predominate over residues 32–59; sequence LKSTKSATPNRSLVPTKPATSRNSVMSP. Low complexity predominate over residues 60–79; sequence SSSKSTKSTSTKRAPSNRPS. Over residues 80 to 90 the composition is skewed to basic residues; that stretch reads SRSRVRSKART. Polar residues predominate over residues 92–104; that stretch reads SRVSTDTRTSKAS. Over residues 112 to 136 the composition is skewed to basic residues; the sequence is HQRRGTHSRGRTPGRRGSRSSKRSP. Composition is skewed to polar residues over residues 213–224 and 257–272; these read TPSTAKCQTPTG and YSPT…YNQA. The segment covering 273–285 has biased composition (low complexity); the sequence is STRSRPQSHSQSR. Residues 286 to 320 show a composition bias toward basic residues; the sequence is SPRRSRSGSQKRTHSRVRSHSWKRNHSRARSRTRK. Basic and acidic residues-rich tracts occupy residues 359–388 and 397–521; these read PSKE…KESG and KQRD…ERDH. Residues 522–536 show a composition bias toward basic residues; sequence RRSRSPSKERQRRQS. Composition is skewed to basic and acidic residues over residues 539-595 and 611-628; these read PNKE…DHSR and SSKE…KEGN. The segment covering 657–666 has biased composition (polar residues); that stretch reads TRTSSLSQNR. Over residues 667 to 681 the composition is skewed to low complexity; it reads TPSKTSSHSPSTFPS. The segment covering 682–715 has biased composition (polar residues); the sequence is GGQTLSQDDSQADATTSKATLPGERSSSSSSKLA.

The polypeptide is Serine/arginine repetitive matrix protein 5 (SRRM5) (Homo sapiens (Human)).